An 827-amino-acid chain; its full sequence is Probable inorganic carbon transporter subunit DabA2 (827 aa).

C351, D353, H524, and C539 together coordinate Zn(2+).

Belongs to the inorganic carbon transporter (TC 9.A.2) DabA family. As to quaternary structure, forms a complex with DabB2, possibly a heterodimer. Requires Zn(2+) as cofactor.

The protein localises to the cell inner membrane. Its activity is regulated as follows. Uptake of inorganic carbon by cells in the presence of thiosulphate is fully inhibited by the uncouplers carbonyl cyanide m-chlorophenyl hydrazone (CCCP), carbonyl cyanide p-trifluoromethoxyphenyl hydrazone (FCCP), S13 or SF6847. Not inhibited by the ATPase inhibitor N,N-dicyclohexylcarbodiimide (DCCD). Inorganic carbon uptake is inhibited by the ionophore CCCP, suggesting uptake is coupled to a cation gradient. In terms of biological role, part of an energy-coupled inorganic carbon pump; its substrate may be carbon dioxide. Expression of both dabA2 and dabB2 (DAB2) restores growth in ambient air to E.coli deleted of its carbonic anhydrase genes (called CAfree, deletion of 'can' and 'cynT'); neither dabA2 or dabB2 alone is sufficient. Rescue is pH-independent, suggesting it transports CO(2) and not carbonate ions. Together the genes allow greater than normal uptake of inorganic carbon by E.coli. Uptake of carbon dioxide rather than bicarbonate has been suggested based on kinetic calculations. The chain is Probable inorganic carbon transporter subunit DabA2 from Halothiobacillus neapolitanus (strain ATCC 23641 / c2) (Thiobacillus neapolitanus).